A 383-amino-acid polypeptide reads, in one-letter code: Lipid-A-disaccharide synthase (383 aa).

Belongs to the LpxB family.

The enzyme catalyses a lipid X + a UDP-2-N,3-O-bis[(3R)-3-hydroxyacyl]-alpha-D-glucosamine = a lipid A disaccharide + UDP + H(+). It participates in bacterial outer membrane biogenesis; LPS lipid A biosynthesis. Its function is as follows. Condensation of UDP-2,3-diacylglucosamine and 2,3-diacylglucosamine-1-phosphate to form lipid A disaccharide, a precursor of lipid A, a phosphorylated glycolipid that anchors the lipopolysaccharide to the outer membrane of the cell. The protein is Lipid-A-disaccharide synthase of Myxococcus xanthus (strain DK1622).